The following is a 139-amino-acid chain: D-ribose pyranase (139 aa).

Residue H20 is the Proton donor of the active site. Residues D28, H106, and 128–130 each bind substrate; that span reads YAN.

Belongs to the RbsD / FucU family. RbsD subfamily. As to quaternary structure, homodecamer.

The protein localises to the cytoplasm. The catalysed reaction is beta-D-ribopyranose = beta-D-ribofuranose. It functions in the pathway carbohydrate metabolism; D-ribose degradation; D-ribose 5-phosphate from beta-D-ribopyranose: step 1/2. Its function is as follows. Catalyzes the interconversion of beta-pyran and beta-furan forms of D-ribose. The chain is D-ribose pyranase from Escherichia coli (strain 55989 / EAEC).